A 141-amino-acid chain; its full sequence is Cystatin (141 aa).

Positions methionine 1–methionine 26 are cleaved as a signal peptide. One can recognise a Cystatin domain in the interval glycine 29 to tryptophan 129. The Secondary area of contact signature appears at glutamine 73 to glycine 77. 2 disulfide bridges follow: cysteine 91-cysteine 107 and cysteine 120-cysteine 140.

It belongs to the cystatin family. In terms of tissue distribution, expressed at a low level by the venom gland (at protein level).

Its subcellular location is the secreted. Inhibits various C1 cysteine proteases including cathepsin L, papain and cathepsin B. This protein has no toxic activity and its function in the venom is unknown. It may play a role as a housekeeping or regulatory protein. This is Cystatin from Hoplocephalus stephensii (Stephens's banded snake).